The chain runs to 295 residues: Ethanolamine ammonia-lyase small subunit (295 aa).

Residues Val207, Glu228, and Cys258 each contribute to the adenosylcob(III)alamin site.

It belongs to the EutC family. As to quaternary structure, the basic unit is a heterodimer which dimerizes to form tetramers. The heterotetramers trimerize; 6 large subunits form a core ring with 6 small subunits projecting outwards. Adenosylcob(III)alamin is required as a cofactor.

It localises to the bacterial microcompartment. It catalyses the reaction ethanolamine = acetaldehyde + NH4(+). It functions in the pathway amine and polyamine degradation; ethanolamine degradation. Functionally, catalyzes the deamination of various vicinal amino-alcohols to oxo compounds. Allows this organism to utilize ethanolamine as the sole source of nitrogen and carbon in the presence of external vitamin B12. The protein is Ethanolamine ammonia-lyase small subunit of Escherichia coli O81 (strain ED1a).